Here is a 158-residue protein sequence, read N- to C-terminus: uncharacterized protein (158 aa).

4 helical membrane passes run 42-62 (FHFA…GFLY), 71-91 (WIFI…HLIA), 102-122 (LLTG…QMFL), and 130-150 (ELII…PLLF).

Its subcellular location is the cell membrane. This is an uncharacterized protein from Bacillus subtilis (strain 168).